The primary structure comprises 123 residues: Small ribosomal subunit protein uS12 (123 aa).

The residue at position 89 (Asp89) is a 3-methylthioaspartic acid.

This sequence belongs to the universal ribosomal protein uS12 family. Part of the 30S ribosomal subunit. Contacts proteins S8 and S17. May interact with IF1 in the 30S initiation complex.

Its function is as follows. With S4 and S5 plays an important role in translational accuracy. In terms of biological role, interacts with and stabilizes bases of the 16S rRNA that are involved in tRNA selection in the A site and with the mRNA backbone. Located at the interface of the 30S and 50S subunits, it traverses the body of the 30S subunit contacting proteins on the other side and probably holding the rRNA structure together. The combined cluster of proteins S8, S12 and S17 appears to hold together the shoulder and platform of the 30S subunit. The sequence is that of Small ribosomal subunit protein uS12 from Nitrobacter hamburgensis (strain DSM 10229 / NCIMB 13809 / X14).